The chain runs to 211 residues: Claudin-7 (211 aa).

Residues 1 to 7 lie on the Cytoplasmic side of the membrane; that stretch reads MANSGLQ. Residues 8–28 traverse the membrane as a helical segment; that stretch reads LLGFSMALLGWVGLVACTAIP. The Extracellular portion of the chain corresponds to 29–81; sequence QWQMSSYAGDNIITAQAMYKGLWMDCVTQSTGMMSCKMYDSVLALSAALQATR. A helical transmembrane segment spans residues 82–102; that stretch reads ALMVVSLVLGFLAMFVATMGM. Topologically, residues 103–117 are cytoplasmic; that stretch reads KCTRCGGDDKVKKAR. A helical transmembrane segment spans residues 118–138; it reads IAMGGGIIFIVAGLAALVACS. The Extracellular portion of the chain corresponds to 139–160; it reads WYGHQIVTDFYNPLIPTNIKYE. The chain crosses the membrane as a helical span at residues 161 to 181; it reads FGPAIFIGWAGSALVILGGAL. Over 182-211 the chain is Cytoplasmic; the sequence is LSCSCPGNESKAGYRVPRSYPKSNSSKEYV. An interactions with TJP1, TJP2 and TJP3 region spans residues 210 to 211; sequence YV.

This sequence belongs to the claudin family. As to quaternary structure, directly interacts with TJP1/ZO-1, TJP2/ZO-2 and TJP3/ZO-3. The phosphorylated form interacts with EPCAM. Does not interact with CD81. Phosphorylated. As to expression, expressed in kidney, lung and prostate. Isoform 1 seems to be predominant, except in some normal prostate samples, where isoform 2 is the major form. Down-regulated in breast cancers, including ductal carcinoma in situ (DCIS), lobular carcinoma in situ (LCIS) and invasive ductal carcinoma (IDC) (at protein level), as well as in several cancer cell lines. Loss of expression correlates with histological grade, occurring predominantly in high-grade lesions.

The protein resides in the cell membrane. The protein localises to the basolateral cell membrane. It is found in the cell junction. It localises to the tight junction. In terms of biological role, plays a major role in tight junction-specific obliteration of the intercellular space. The polypeptide is Claudin-7 (CLDN7) (Homo sapiens (Human)).